A 113-amino-acid polypeptide reads, in one-letter code: Integration host factor subunit alpha (113 aa).

The interval 88-113 (ALNGGVSDETEGADDDDDDEEGEGDE) is disordered. Acidic residues predominate over residues 95-113 (DETEGADDDDDDEEGEGDE).

The protein belongs to the bacterial histone-like protein family. Heterodimer of an alpha and a beta chain.

Functionally, this protein is one of the two subunits of integration host factor, a specific DNA-binding protein that functions in genetic recombination as well as in transcriptional and translational control. This Anaeromyxobacter dehalogenans (strain 2CP-C) protein is Integration host factor subunit alpha.